The following is a 143-amino-acid chain: Cofilin (143 aa).

One can recognise an ADF-H domain in the interval 5-137; it reads GVAVADESLN…AYESVLEKVS (133 aa).

This sequence belongs to the actin-binding proteins ADF family.

Its subcellular location is the cytoplasm. The protein resides in the cytoskeleton. It is found in the nucleus matrix. Its function is as follows. Controls reversibly actin polymerization and depolymerization in a pH-sensitive manner. It has the ability to bind G- and F-actin in a 1:1 ratio of cofilin to actin. Binding to F-actin is regulated by tropomyosin. It is the major component of intranuclear and cytoplasmic actin rods. Required for accumulation of actin at the cell division site via depolymerizing actin at the cell ends. In association with myosin II has a role in the assembly of the contractile ring via severing actin filaments. Involved in the maintenance of the contractile ring once formed. In association with profilin and capping protein, has a role in the mitotic reorganization of the actin cytoskeleton. This is Cofilin (COF1) from Kluyveromyces lactis (strain ATCC 8585 / CBS 2359 / DSM 70799 / NBRC 1267 / NRRL Y-1140 / WM37) (Yeast).